Consider the following 255-residue polypeptide: Propionicin-F (255 aa).

2 propeptides span residues methionine 1–cysteine 101 and glycine 145–valine 255.

The protein resides in the secreted. Bacteriocin with specific antibacterial activity against strains of P.freudenreichii. No antibacterial activity was detected against P.acidipropionici, P.jensenii and P.thoenii. This Propionibacterium freudenreichii subsp. freudenreichii protein is Propionicin-F.